The primary structure comprises 183 residues: MNFTEIAEKLKQNQVVAYPTEAVFGLGCNPLSESAVKKLLDLKQRPIDKGLILIAPDLLYLLPFIDTERLNSRQISRLTANYSHPVTWVVPVKFGTPKFLTGRFNSIAVRISDHPAVAELCSLTGFALTSTSANLSGLPPCKTAAEVRSQFGQFFPVLDYPVGHAEKPSEIRNLLTDQLIREG.

The 183-residue stretch at 1–183 (MNFTEIAEKL…LLTDQLIREG (183 aa)) folds into the YrdC-like domain.

Belongs to the SUA5 family. TsaC subfamily.

The protein resides in the cytoplasm. The catalysed reaction is L-threonine + hydrogencarbonate + ATP = L-threonylcarbamoyladenylate + diphosphate + H2O. Functionally, required for the formation of a threonylcarbamoyl group on adenosine at position 37 (t(6)A37) in tRNAs that read codons beginning with adenine. Catalyzes the conversion of L-threonine, HCO(3)(-)/CO(2) and ATP to give threonylcarbamoyl-AMP (TC-AMP) as the acyladenylate intermediate, with the release of diphosphate. This chain is Threonylcarbamoyl-AMP synthase, found in Actinobacillus succinogenes (strain ATCC 55618 / DSM 22257 / CCUG 43843 / 130Z).